The chain runs to 159 residues: 2-C-methyl-D-erythritol 2,4-cyclodiphosphate synthase (159 aa).

Positions 10 and 12 each coordinate a divalent metal cation. 4-CDP-2-C-methyl-D-erythritol 2-phosphate-binding positions include 10 to 12 and 36 to 37; these read DVH and HS. His44 is an a divalent metal cation binding site. 4-CDP-2-C-methyl-D-erythritol 2-phosphate contacts are provided by residues 58-60, 63-67, 102-108, 134-137, Phe141, and Arg144; these read DIG, FPDTD, AQAPKMA, and TTTE.

The protein belongs to the IspF family. In terms of assembly, homotrimer. A divalent metal cation serves as cofactor.

It carries out the reaction 4-CDP-2-C-methyl-D-erythritol 2-phosphate = 2-C-methyl-D-erythritol 2,4-cyclic diphosphate + CMP. Its pathway is isoprenoid biosynthesis; isopentenyl diphosphate biosynthesis via DXP pathway; isopentenyl diphosphate from 1-deoxy-D-xylulose 5-phosphate: step 4/6. In terms of biological role, involved in the biosynthesis of isopentenyl diphosphate (IPP) and dimethylallyl diphosphate (DMAPP), two major building blocks of isoprenoid compounds. Catalyzes the conversion of 4-diphosphocytidyl-2-C-methyl-D-erythritol 2-phosphate (CDP-ME2P) to 2-C-methyl-D-erythritol 2,4-cyclodiphosphate (ME-CPP) with a corresponding release of cytidine 5-monophosphate (CMP). The sequence is that of 2-C-methyl-D-erythritol 2,4-cyclodiphosphate synthase from Shewanella sp. (strain ANA-3).